Here is a 500-residue protein sequence, read N- to C-terminus: MSHNDTPANNTNGIADVYADENPCEIAGEDNPPQPYSCFDGEDRAHDKTRIIKWLCYHPKGVPLARTVKALFPDDSEKRISERSYTSTDYNFVSRFLERTGYAVLDSEAGLIEASPTSRAFHLTLESKIPSEHTTNYAKDRAEACAYGMWSLNDVENARLLAKDFTTYLESIHDRRLMLENVDNPDMKLTMPYHTRFNDDRRKAEQWARYNSAWEAADDKYSSGVMVTLTTDPKRYDSIGEMLDGLMDAWQNLHETLNQRYLEGTRLDFIRALEFGGSEKSNHIGLPHLHVCVFGVPYIDHRWLKHYWSSKHAEIVHIHGMNKRGNDSWIMTSGTHAGKSVAGYLGKYLSKTFERIADDPDELREHYQSWSEGGDWANSELWKLALYWATGRQFWASSHDLKDDSRNFDTLQEVPGLGETKLDRLEAHGIQTLSDVRLASVDEIASIDGISESFAEKLKDLVGEPSEFDVFRFEFRGAARYEEMPASWSHARHLGVSACG.

This is an uncharacterized protein from Halorubrum sp. PV6 (HRPV-1).